Here is a 193-residue protein sequence, read N- to C-terminus: dCTP deaminase, dUMP-forming (193 aa).

DCTP is bound by residues 101–106, Asp119, 127–129, Gln148, Tyr162, and Gln174; these read KSSLGR and TLE. The active-site Proton donor/acceptor is the Glu129. The segment at 161–184 is disordered; that stretch reads PYGSETTGSHYQGQRGPTPSRSYQ.

The protein belongs to the dCTP deaminase family. Homotrimer.

The enzyme catalyses dCTP + 2 H2O = dUMP + NH4(+) + diphosphate. It participates in pyrimidine metabolism; dUMP biosynthesis; dUMP from dCTP: step 1/1. In terms of biological role, bifunctional enzyme that catalyzes both the deamination of dCTP to dUTP and the hydrolysis of dUTP to dUMP without releasing the toxic dUTP intermediate. The protein is dCTP deaminase, dUMP-forming of Bifidobacterium animalis subsp. lactis (strain AD011).